The following is a 363-amino-acid chain: Peptide chain release factor 1 (363 aa).

The residue at position 237 (glutamine 237) is an N5-methylglutamine.

It belongs to the prokaryotic/mitochondrial release factor family. Post-translationally, methylated by PrmC. Methylation increases the termination efficiency of RF1.

It localises to the cytoplasm. Functionally, peptide chain release factor 1 directs the termination of translation in response to the peptide chain termination codons UAG and UAA. The sequence is that of Peptide chain release factor 1 from Hydrogenovibrio crunogenus (strain DSM 25203 / XCL-2) (Thiomicrospira crunogena).